The primary structure comprises 347 residues: GTPase Obg (347 aa).

The region spanning Met1–Leu159 is the Obg domain. Positions Asn127–Pro146 are disordered. Residues Arg129–Pro138 show a composition bias toward polar residues. Residues Ala160–Glu334 enclose the OBG-type G domain. GTP-binding positions include Gly166–Ser173, Phe191–Tyr195, Asp213–Gly216, Asn284–Asp287, and Ser315–Ala317. Residues Ser173 and Thr193 each coordinate Mg(2+).

The protein belongs to the TRAFAC class OBG-HflX-like GTPase superfamily. OBG GTPase family. As to quaternary structure, monomer. Requires Mg(2+) as cofactor.

It is found in the cytoplasm. Functionally, an essential GTPase which binds GTP, GDP and possibly (p)ppGpp with moderate affinity, with high nucleotide exchange rates and a fairly low GTP hydrolysis rate. Plays a role in control of the cell cycle, stress response, ribosome biogenesis and in those bacteria that undergo differentiation, in morphogenesis control. The polypeptide is GTPase Obg (Thioalkalivibrio sulfidiphilus (strain HL-EbGR7)).